A 252-amino-acid polypeptide reads, in one-letter code: Thiamine thiazole synthase (252 aa).

Residues Ser35, 54 to 55 (EK), Gly62, Val126, and 152 to 154 (HVD) contribute to the NAD(+) site. 2 residues coordinate Fe cation: Asp154 and His169. Position 217 (Met217) interacts with NAD(+). Glycine is bound at residue Arg227.

The protein belongs to the THI4 family. In terms of assembly, homooctamer; tetramer of dimers. It depends on Fe(2+) as a cofactor.

It catalyses the reaction hydrogen sulfide + glycine + NAD(+) = ADP-5-ethyl-4-methylthiazole-2-carboxylate + nicotinamide + 3 H2O + H(+). It functions in the pathway cofactor biosynthesis; thiamine diphosphate biosynthesis. Involved in the biosynthesis of the thiazole moiety of thiamine. Catalyzes the conversion of NAD and glycine to adenosine diphosphate 5-(2-hydroxyethyl)-4-methylthiazole-2-carboxylate (ADT), an adenylated thiazole intermediate, using free sulfide as a source of sulfur. This is Thiamine thiazole synthase from Pyrococcus furiosus (strain ATCC 43587 / DSM 3638 / JCM 8422 / Vc1).